Consider the following 234-residue polypeptide: DNA repair protein RecO (234 aa).

This sequence belongs to the RecO family.

In terms of biological role, involved in DNA repair and RecF pathway recombination. The protein is DNA repair protein RecO of Coxiella burnetii (strain RSA 331 / Henzerling II).